Consider the following 647-residue polypeptide: MIKITFPDGAVREFESGVTTFDIAESISKSLAKKALAGKFNDQLIDTTRAIEEDGSIEIVTPDHKDAYEVLRHSAAHLFAQAAKRLFPNLHLGVGPAIAEGFYYDTDNAEGQISNEDLPRIEAEMQKIVTENYPCIREEVTKEEALELFKDDPYKVELINEHAGAGLTVYRQGEFVDLCRGPHVPSTGRIQVFHLLNVAGAYWRGNSDNNMMQRIYGTAWFDKKDLKAYLTRLEEAKERDHRKLGKELDLFMISQEVGQGLPFWLPDGATIRRTLERYITDKELASGYQHVYTPPLASVELYKTSGHWDHYQEDMFPVMDMGDGEEFVLRPMNCPHHIQVYKNHVRSYRELPIRIAELGMMHRYEKSGALSGLQRVREMTLNDGHIFVTPEQIQEEFQRALQLIIDVYADFNLTDYRFRLSYRDPNDTHKYYDNDEMWENAQSMLKAALDEMGVDYFEAEGEAAFYGPKLDIQVKTALGNEETLSTIQLDFLLPERFDLKYIGADGEEHRPVMIHRGVISTMERFTAILIETYKGAFPTWLAPHQVTVIPISNEAHIDYAWEVAKTLRDRGVRADVDDRNEKMQYKIRASQTSKIPYQLIVGDKEMEDKSVNVRRYGSKTTHTESVEEFVENILADIARKSRPDAQA.

Residues 1–61 (MIKITFPDGA…EEDGSIEIVT (61 aa)) form the TGS domain. The tract at residues 240 to 538 (DHRKLGKELD…LIETYKGAFP (299 aa)) is catalytic. Residues Cys334, His385, and His515 each contribute to the Zn(2+) site.

This sequence belongs to the class-II aminoacyl-tRNA synthetase family. As to quaternary structure, homodimer. It depends on Zn(2+) as a cofactor.

It localises to the cytoplasm. It carries out the reaction tRNA(Thr) + L-threonine + ATP = L-threonyl-tRNA(Thr) + AMP + diphosphate + H(+). Functionally, catalyzes the attachment of threonine to tRNA(Thr) in a two-step reaction: L-threonine is first activated by ATP to form Thr-AMP and then transferred to the acceptor end of tRNA(Thr). Also edits incorrectly charged L-seryl-tRNA(Thr). This is Threonine--tRNA ligase from Streptococcus pyogenes serotype M1.